Consider the following 493-residue polypeptide: Homeobox protein abdominal-B (493 aa).

Residues 1–29 (MQQHHLQQQQQQQQQQEQQHLQEQQQHLQ) show a composition bias toward low complexity. Disordered stretches follow at residues 1-199 (MQQH…APGQ), 322-360 (AAARQSVEGTSTSSYEPPTYSSPGGLRGYPSENYSSSGA), and 438-475 (RRMKNKKNSQRQANQQNNNNNSSSNHNHAQATQQHHSG). Positions 30 to 39 (QLHHHAHHHL) are enriched in basic residues. Composition is skewed to low complexity over residues 54–95 (PHLQ…THAV) and 105–134 (LVAVQQQHLPAPQQQQQLQQQQQQQQQQLA). The span at 144–153 (PAQTPTGPSA) shows a compositional bias: polar residues. The span at 154–173 (QQQQHLTSPHHQQLPQQQTP) shows a compositional bias: low complexity. The segment covering 174-184 (NSVASGASSNL) has biased composition (polar residues). A compositionally biased stretch (low complexity) spans 329 to 345 (EGTSTSSYEPPTYSSPG). A DNA-binding region (homeobox) is located at residues 387 to 446 (VRKKRKPYSKFQTLELEKEFLFNAYVSKQKRWELARNLQLTERQVKIWFQNRRMKNKKNS). Residues 447-475 (QRQANQQNNNNNSSSNHNHAQATQQHHSG) show a composition bias toward low complexity.

It belongs to the Abd-B homeobox family. Isoform M and isoform R are expressed in ectodermal and mesodermal tissues and central nervous system of fourth to ninth embryonic abdominal segments. Later in embryogenesis, expression is seen in visceral mesoderm surrounding hindgut and in two Malpighian tubules.

The protein localises to the nucleus. Its function is as follows. Sequence-specific transcription factor which is part of a developmental regulatory system that provides cells with specific positional identities on the anterior-posterior axis. The polypeptide is Homeobox protein abdominal-B (Abd-B) (Drosophila melanogaster (Fruit fly)).